The sequence spans 284 residues: 4-hydroxybenzoate octaprenyltransferase (284 aa).

9 helical membrane-spanning segments follow: residues Ile19–Leu39, Ile42–Ile62, Gly85–Ile105, Val107–Leu127, Phe134–Phe154, Ala165–Leu185, Ile211–Phe231, Ser233–Tyr253, and Cys261–Ile281.

Belongs to the UbiA prenyltransferase family. Mg(2+) is required as a cofactor.

It localises to the cell inner membrane. It catalyses the reaction all-trans-octaprenyl diphosphate + 4-hydroxybenzoate = 4-hydroxy-3-(all-trans-octaprenyl)benzoate + diphosphate. It participates in cofactor biosynthesis; ubiquinone biosynthesis. Functionally, catalyzes the prenylation of para-hydroxybenzoate (PHB) with an all-trans polyprenyl group. Mediates the second step in the final reaction sequence of ubiquinone-8 (UQ-8) biosynthesis, which is the condensation of the polyisoprenoid side chain with PHB, generating the first membrane-bound Q intermediate 3-octaprenyl-4-hydroxybenzoate. The protein is 4-hydroxybenzoate octaprenyltransferase of Francisella tularensis subsp. holarctica (strain LVS).